Consider the following 332-residue polypeptide: Torsin-1A (332 aa).

An N-terminal signal peptide occupies residues 1-20; the sequence is MKLGRAVLGLLLLAPSVVQA. The interval 91–251 is interaction with SNAPIN; the sequence is KPKKPLTLSL…VSVFNNKNSG (161 aa). 102–109 provides a ligand contact to ATP; the sequence is GWTGTGKN. N-linked (GlcNAc...) (high mannose) asparagine glycans are attached at residues Asn-143 and Asn-158. Residues 251 to 332 form an interaction with KLC1 region; that stretch reads GFWHSSLIDR…FTKLDYYYDD (82 aa). An interaction with SYNE3 region spans residues 312 to 332; that stretch reads RVFSDKGCKTVFTKLDYYYDD.

It belongs to the ClpA/ClpB family. Torsin subfamily. As to quaternary structure, homohexamer. Interacts with TOR1B; the interaction may be specific of neural tissues. Interacts (ATP-bound) with TOR1AIP1 and TOR1AIP2; the interactions induce ATPase activity. Interacts with KLHL14; preferentially when ATP-free. Interacts with KLC1 (via TPR repeats); the interaction associates TOR1A with the kinesin oligomeric complex. Interacts with COPS4; the interaction associates TOR1A with the CSN complex. Interacts with SNAPIN; the interaction is direct and associates SNAPIN with the CSN complex. Interacts with STON2. Interacts (ATP-bound) with SYNE3 (via KASH domain); the interaction is required for SYNE3 nuclear envelope localization. Interacts with VIM; the interaction associates TOR1A with the cytoskeleton. Interacts with PLEC. Interacts (ATP-bound) with SLC6A3; regulates SLC6A3 transport to the plasma membrane. Post-translationally, N-glycosylated. In terms of tissue distribution, widely expressed. Highest levels in kidney and liver. In the brain, high levels found in the dopaminergic neurons of the substantia nigra pars compacta, as well as in the neocortex, hippocampus and cerebellum. Also highly expressed in the spinal cord.

The protein localises to the endoplasmic reticulum lumen. The protein resides in the nucleus membrane. It localises to the cell projection. Its subcellular location is the growth cone. It is found in the cytoplasmic vesicle membrane. The protein localises to the cytoplasmic vesicle. The protein resides in the secretory vesicle. It localises to the synaptic vesicle. Its subcellular location is the cytoplasm. It is found in the cytoskeleton. The catalysed reaction is ATP + H2O = ADP + phosphate + H(+). Protein with chaperone functions important for the control of protein folding, processing, stability and localization as well as for the reduction of misfolded protein aggregates. Involved in the regulation of synaptic vesicle recycling, controls STON2 protein stability in collaboration with the COP9 signalosome complex (CSN). In the nucleus, may link the cytoskeleton with the nuclear envelope, this mechanism seems to be crucial for the control of nuclear polarity, cell movement and, specifically in neurons, nuclear envelope integrity. Participates in the cellular trafficking and may regulate the subcellular location of multipass membrane proteins such as the dopamine transporter SLC6A3, leading to the modulation of dopamine neurotransmission. In the endoplasmic reticulum, plays a role in the quality control of protein folding by increasing clearance of misfolded proteins such as SGCE variants or holding them in an intermediate state for proper refolding. May have a redundant function with TOR1B in non-neural tissues. In Homo sapiens (Human), this protein is Torsin-1A (TOR1A).